A 371-amino-acid polypeptide reads, in one-letter code: Geranylgeranyl transferase type-2 subunit alpha (371 aa).

PFTA repeat units lie at residues 45–79, 92–126, 131–165, 177–211, and 242–276; these read YSDE…NNYS, ILNQ…ELVK, NWKY…NMEL, INLD…KIYN, and LLKN…DDLF.

Belongs to the protein prenyltransferase subunit alpha family. As to quaternary structure, heterodimer of an alpha and a beta subunit.

It carries out the reaction geranylgeranyl diphosphate + L-cysteinyl-[protein] = S-geranylgeranyl-L-cysteinyl-[protein] + diphosphate. Catalyzes the transfer of a geranyl-geranyl moiety from geranyl-geranyl pyrophosphate to proteins having the C-terminal -XCC or -XCXC, where both cysteines may become modified. Acts on YPT1 and SEC4. The sequence is that of Geranylgeranyl transferase type-2 subunit alpha (BET4) from Candida albicans (Yeast).